Consider the following 193-residue polypeptide: UMP-CMP kinase (193 aa).

13–18 is a binding site for ATP; sequence GAGKGT. The segment at 33–63 is NMP; it reads SAGDLLRDERKKPDSQYGELIESYIRDGKIV. Residues arginine 39, 61 to 63, and 93 to 96 contribute to the a ribonucleoside 5'-phosphate site; these read KIV and GFPR. Asparagine 100 serves as a coordination point for CMP. Positions 133-143 are LID; that stretch reads ERGKSSGRSDD. Arginine 134 contributes to the ATP binding site. A ribonucleoside 5'-phosphate is bound by residues arginine 140 and arginine 151. Lysine 179 contacts ATP.

The protein belongs to the adenylate kinase family. UMP-CMP kinase subfamily. As to quaternary structure, monomer. The cofactor is Mg(2+).

Its subcellular location is the nucleus. The protein resides in the cytoplasm. The catalysed reaction is CMP + ATP = CDP + ADP. It carries out the reaction dCMP + ATP = dCDP + ADP. The enzyme catalyses UMP + ATP = UDP + ADP. It catalyses the reaction a 2'-deoxyribonucleoside 5'-diphosphate + ATP = a 2'-deoxyribonucleoside 5'-triphosphate + ADP. The catalysed reaction is a ribonucleoside 5'-diphosphate + ATP = a ribonucleoside 5'-triphosphate + ADP. In terms of biological role, catalyzes the phosphorylation of pyrimidine nucleoside monophosphates at the expense of ATP. Plays an important role in de novo pyrimidine nucleotide biosynthesis. Has preference for UMP and CMP as phosphate acceptors. Also displays broad nucleoside diphosphate kinase activity. This chain is UMP-CMP kinase (cmpk1), found in Xenopus laevis (African clawed frog).